The sequence spans 127 residues: Large ribosomal subunit protein bL17 (127 aa).

This sequence belongs to the bacterial ribosomal protein bL17 family. Part of the 50S ribosomal subunit. Contacts protein L32.

This is Large ribosomal subunit protein bL17 from Leuconostoc mesenteroides subsp. mesenteroides (strain ATCC 8293 / DSM 20343 / BCRC 11652 / CCM 1803 / JCM 6124 / NCDO 523 / NBRC 100496 / NCIMB 8023 / NCTC 12954 / NRRL B-1118 / 37Y).